A 269-amino-acid polypeptide reads, in one-letter code: Eukaryotic translation initiation factor 3 subunit G-1 (269 aa).

In terms of domain architecture, RRM spans 188-266 (AAIRISNLSE…LILSVEWSKP (79 aa)).

It belongs to the eIF-3 subunit G family. Component of the eukaryotic translation initiation factor 3 (eIF-3) complex. The eIF-3 complex interacts with pix.

It localises to the cytoplasm. RNA-binding component of the eukaryotic translation initiation factor 3 (eIF-3) complex, which is involved in protein synthesis of a specialized repertoire of mRNAs and, together with other initiation factors, stimulates binding of mRNA and methionyl-tRNAi to the 40S ribosome. The eIF-3 complex specifically targets and initiates translation of a subset of mRNAs involved in cell proliferation. This subunit can bind 18S rRNA. In Drosophila persimilis (Fruit fly), this protein is Eukaryotic translation initiation factor 3 subunit G-1.